Reading from the N-terminus, the 302-residue chain is Coiled-coil domain-containing protein 2 (302 aa).

The N-terminal stretch at 1 to 22 is a signal peptide; it reads MKNFGLLVVCLSLATLVIPSDG. Residues 198-234 adopt a coiled-coil conformation; sequence FADAMEKKAEALENAAEAAAEYISDQSEEVDDLSEEV. Residues 221–257 form a disordered region; it reads SDQSEEVDDLSEEVLDDDSDENDSTSSESEVEDSDVD. Residues 223 to 257 show a composition bias toward acidic residues; it reads QSEEVDDLSEEVLDDDSDENDSTSSESEVEDSDVD. N242 carries N-linked (GlcNAc...) asparagine glycosylation.

In terms of tissue distribution, component of the acid-insoluble organic matrix of calcified layers of the shell (at protein level).

It is found in the secreted. The polypeptide is Coiled-coil domain-containing protein 2 (Lottia gigantea (Giant owl limpet)).